An 83-amino-acid polypeptide reads, in one-letter code: Mu-theraphotoxin-Hhn2b 3 (83 aa).

The signal sequence occupies residues 1-21; it reads MKASMFLALAGLVLLFVVCYA. Positions 22–48 are excised as a propeptide; sequence SESEEKEFPRELISKIFAVDDFKGEVR. Intrachain disulfides connect Cys50–Cys65, Cys57–Cys70, and Cys64–Cys77. At Leu81 the chain carries Leucine amide.

The protein belongs to the neurotoxin 10 (Hwtx-1) family. 14 (Hntx-1) subfamily. In terms of assembly, monomer. Expressed by the venom gland.

It is found in the secreted. Weakly blocks the rat SCN2A/SCN1B (Nav1.2/beta-1) sodium channel (IC(50)=68 uM) and the insect sodium channel para/tipE (IC(50)=4.3 uM), without altering the activation or inactivation kinetics (depressant toxin). The polypeptide is Mu-theraphotoxin-Hhn2b 3 (Cyriopagopus hainanus (Chinese bird spider)).